Consider the following 449-residue polypeptide: 23S rRNA (uracil(1939)-C(5))-methyltransferase RlmD (449 aa).

One can recognise a TRAM domain in the interval 12 to 70 (SKQLSAKQSFSVHQLDHLGAGIAQHQGKVVFIPGALPSETVQAQLTEQKKNYARAKLIK). Residues cysteine 83, cysteine 89, cysteine 92, and cysteine 170 each coordinate [4Fe-4S] cluster. Positions 282, 311, 316, 332, 359, and 379 each coordinate S-adenosyl-L-methionine. Cysteine 405 acts as the Nucleophile in catalysis.

The protein belongs to the class I-like SAM-binding methyltransferase superfamily. RNA M5U methyltransferase family. RlmD subfamily.

The catalysed reaction is uridine(1939) in 23S rRNA + S-adenosyl-L-methionine = 5-methyluridine(1939) in 23S rRNA + S-adenosyl-L-homocysteine + H(+). Functionally, catalyzes the formation of 5-methyl-uridine at position 1939 (m5U1939) in 23S rRNA. This Shewanella sp. (strain MR-4) protein is 23S rRNA (uracil(1939)-C(5))-methyltransferase RlmD.